A 506-amino-acid chain; its full sequence is MFTSKSNSVSPSPSLEQADSDALDISTKVQLYGVLWKRPFGRPSAKWSRRFFIIKESFLLYYSESEKKSFETNKYFNIHPKGVIPLGGCLVEPKEEPSMPYAMKISHQDFHGNILLAAESEFEQTQWLEMLQESGKVTWKNAQLGEAMIKSLEAQGLQLAKEKQEYLDKLMEETEELCLQREQREELERLNQVLEAEKQQFEEVVQELRMEQEQIKRELELTARCLKGVEQEKKELRHLTESLQQTLEELSIEKKKTLEMLEENENHLQTLANQSEQPPPSGGLHSNLRQIEEKMQQLLEEKLLAEKRMKENEERSRALEEEREFYSSQSQALQNSLQELTAEKQQAERELKAEVKVRMDLERRLREAEGALRSLEQGLNSKVRNKEKEERMRADVSHLKRFFEECIRNAELEAKMPVIMKNSVYIHKAATRRIKSCRFHRRRSSTSWNDMKPSQSFMTSQLDANNMEELKEVAKRLSRDQRFRESIYHIMATQPGAPSALSRGGK.

One can recognise a PH domain in the interval 28–136 (KVQLYGVLWK…WLEMLQESGK (109 aa)). Positions 146 to 391 (EAMIKSLEAQ…KVRNKEKEER (246 aa)) form a coiled coil. Position 503 is an omega-N-methylarginine (Arg503).

This sequence belongs to the PLEKHD1 family.

This Homo sapiens (Human) protein is Pleckstrin homology domain-containing family D member 1 (PLEKHD1).